A 364-amino-acid polypeptide reads, in one-letter code: MKLLIAGGGTGGHLFPGIAVAEEFLARDKQNEVLFVGTWKGIEARVLPKTGYRLECITAAGIRGKGSLARAKGLAKFLYGYAQSRKILKEFRPDLVLGVGGYASAPTLMAARGMQIPRFIHEQNAIPGFTNRMLAKVADKIFISLEESRTYFPEDKTLLTGNPLRRQILEQVALAESRERGDDAFHLLVFGGSAGAHRINLTMGEALPSLKEAKGRLRITHQTGENDLEDVTAAYEEQGFTADVVAFIDSMADAYRWADLIVCRAGATTLAEVTACGKPCIFIPYPHAVDDHQRRNAESLLKRGAGFVIIEQELSGEVLAQAIRDLMDDPARLKAVGEAAQELARLDAAQAIVDEMVASTRKEE.

Residues 10-12 (TGG), Asn124, Arg165, Ser193, Ile248, and Gln293 contribute to the UDP-N-acetyl-alpha-D-glucosamine site.

It belongs to the glycosyltransferase 28 family. MurG subfamily.

The protein resides in the cell inner membrane. The catalysed reaction is di-trans,octa-cis-undecaprenyl diphospho-N-acetyl-alpha-D-muramoyl-L-alanyl-D-glutamyl-meso-2,6-diaminopimeloyl-D-alanyl-D-alanine + UDP-N-acetyl-alpha-D-glucosamine = di-trans,octa-cis-undecaprenyl diphospho-[N-acetyl-alpha-D-glucosaminyl-(1-&gt;4)]-N-acetyl-alpha-D-muramoyl-L-alanyl-D-glutamyl-meso-2,6-diaminopimeloyl-D-alanyl-D-alanine + UDP + H(+). Its pathway is cell wall biogenesis; peptidoglycan biosynthesis. Its function is as follows. Cell wall formation. Catalyzes the transfer of a GlcNAc subunit on undecaprenyl-pyrophosphoryl-MurNAc-pentapeptide (lipid intermediate I) to form undecaprenyl-pyrophosphoryl-MurNAc-(pentapeptide)GlcNAc (lipid intermediate II). The sequence is that of UDP-N-acetylglucosamine--N-acetylmuramyl-(pentapeptide) pyrophosphoryl-undecaprenol N-acetylglucosamine transferase from Geobacter sulfurreducens (strain ATCC 51573 / DSM 12127 / PCA).